Reading from the N-terminus, the 478-residue chain is uncharacterized protein (478 aa).

The signal sequence occupies residues 1–19; the sequence is MKLFPLCLSALVMSTATCA. Residues 20 to 214 are Lumenal-facing; the sequence is SSVEGAIEKV…VPVTLKLQRQ (195 aa). Residues 215-235 form a helical membrane-spanning segment; it reads IFLSFSIVYGLISLWWAIRCI. At 236–240 the chain is on the cytoplasmic side; that stretch reads CSRTK. The chain crosses the membrane as a helical span at residues 241–261; it reads LHLVQVCLFCWFSFFILNHPV. The Lumenal portion of the chain corresponds to 262–289; it reads KQRIFSIDNPDEYLVPFVVSCFTYFLGD. The helical transmembrane segment at 290-310 threads the bilayer; sequence GIEYALYSLFITTTVLGFGTI. The Cytoplasmic portion of the chain corresponds to 311–317; the sequence is RRTSKKM. A helical transmembrane segment spans residues 318 to 338; that stretch reads VLFFSLLTCGQAFLVNVAPMV. Topologically, residues 339–356 are lumenal; the sequence is YPLLYISGSDKACVLRMV. The chain crosses the membrane as a helical span at residues 357–377; sequence WVFNKFLYLPLITFLGAVLAF. Topologically, residues 378–391 are cytoplasmic; it reads RFRLKKASQFDTRW. The chain crosses the membrane as a helical span at residues 392 to 412; the sequence is NLFALTLAIIILFAFNDLVIF. Over 413-427 the chain is Lumenal; sequence DKLQKLWKYDDTTLE. Residues 428 to 448 traverse the membrane as a helical segment; it reads YLKIVNGGIKFVAFSILLGPY. The Cytoplasmic portion of the chain corresponds to 449–478; that stretch reads SKLFAEPKSLQLDDFLGKHDGHKDPSLEKF.

Its subcellular location is the endoplasmic reticulum membrane. The protein resides in the golgi apparatus membrane. This is an uncharacterized protein from Schizosaccharomyces pombe (strain 972 / ATCC 24843) (Fission yeast).